Here is a 414-residue protein sequence, read N- to C-terminus: Tyrosine--tRNA ligase (414 aa).

Tyr-38 is an L-tyrosine binding site. The short motif at 43 to 52 is the 'HIGH' region element; sequence CTARSLHIGS. Residues Tyr-172 and Gln-176 each coordinate L-tyrosine. The 'KMSKS' region signature appears at 232 to 236; that stretch reads KMGKT. Lys-235 lines the ATP pocket. The S4 RNA-binding domain occupies 345 to 412; the sequence is ISVAKLLQLA…GKKRRIKVVV (68 aa).

Belongs to the class-I aminoacyl-tRNA synthetase family. TyrS type 1 subfamily. Homodimer.

Its subcellular location is the cytoplasm. It catalyses the reaction tRNA(Tyr) + L-tyrosine + ATP = L-tyrosyl-tRNA(Tyr) + AMP + diphosphate + H(+). Its function is as follows. Catalyzes the attachment of tyrosine to tRNA(Tyr) in a two-step reaction: tyrosine is first activated by ATP to form Tyr-AMP and then transferred to the acceptor end of tRNA(Tyr). This is Tyrosine--tRNA ligase from Anaplasma marginale (strain St. Maries).